We begin with the raw amino-acid sequence, 341 residues long: Putative casein kinase I C03C10.2 (341 aa).

In terms of domain architecture, Protein kinase spans 50–326 (WSIEGVIGNG…KCLYSPKSLL (277 aa)). Residues 56–64 (IGNGGYGQI) and Lys79 contribute to the ATP site. Catalysis depends on Asp173, which acts as the Proton acceptor.

Belongs to the protein kinase superfamily. CK1 Ser/Thr protein kinase family. Casein kinase I subfamily.

The enzyme catalyses L-seryl-[protein] + ATP = O-phospho-L-seryl-[protein] + ADP + H(+). The catalysed reaction is L-threonyl-[protein] + ATP = O-phospho-L-threonyl-[protein] + ADP + H(+). The polypeptide is Putative casein kinase I C03C10.2 (Caenorhabditis elegans).